Consider the following 165-residue polypeptide: 6,7-dimethyl-8-ribityllumazine synthase 2 (165 aa).

5-amino-6-(D-ribitylamino)uracil-binding positions include W24, 56-58 (SFE), and 80-82 (LVV). R88 acts as the Proton donor in catalysis. Residue S113 coordinates 5-amino-6-(D-ribitylamino)uracil. H127 is a (2S)-2-hydroxy-3-oxobutyl phosphate binding site.

It belongs to the DMRL synthase family.

It catalyses the reaction (2S)-2-hydroxy-3-oxobutyl phosphate + 5-amino-6-(D-ribitylamino)uracil = 6,7-dimethyl-8-(1-D-ribityl)lumazine + phosphate + 2 H2O + H(+). Its pathway is cofactor biosynthesis; riboflavin biosynthesis; riboflavin from 2-hydroxy-3-oxobutyl phosphate and 5-amino-6-(D-ribitylamino)uracil: step 1/2. Catalyzes the formation of 6,7-dimethyl-8-ribityllumazine by condensation of 5-amino-6-(D-ribitylamino)uracil with 3,4-dihydroxy-2-butanone 4-phosphate. This is the penultimate step in the biosynthesis of riboflavin. This is 6,7-dimethyl-8-ribityllumazine synthase 2 from Bradyrhizobium diazoefficiens (strain JCM 10833 / BCRC 13528 / IAM 13628 / NBRC 14792 / USDA 110).